A 140-amino-acid chain; its full sequence is Nucleoside diphosphate kinase (140 aa).

ATP is bound by residues Lys-11, Phe-59, Arg-87, Thr-93, Arg-104, and Asn-114. The active-site Pros-phosphohistidine intermediate is the His-117.

It belongs to the NDK family. As to quaternary structure, homotetramer. It depends on Mg(2+) as a cofactor.

The protein resides in the cytoplasm. It carries out the reaction a 2'-deoxyribonucleoside 5'-diphosphate + ATP = a 2'-deoxyribonucleoside 5'-triphosphate + ADP. It catalyses the reaction a ribonucleoside 5'-diphosphate + ATP = a ribonucleoside 5'-triphosphate + ADP. Functionally, major role in the synthesis of nucleoside triphosphates other than ATP. The ATP gamma phosphate is transferred to the NDP beta phosphate via a ping-pong mechanism, using a phosphorylated active-site intermediate. The protein is Nucleoside diphosphate kinase of Novosphingobium aromaticivorans (strain ATCC 700278 / DSM 12444 / CCUG 56034 / CIP 105152 / NBRC 16084 / F199).